Reading from the N-terminus, the 353-residue chain is Photosystem II protein D1 (353 aa).

T2 carries the post-translational modification N-acetylthreonine. T2 is subject to Phosphothreonine. 3 helical membrane-spanning segments follow: residues 29-46, 118-133, and 142-156; these read YIGW…TATS, HFLL…EWEL, and WIAV…AATA. Chlorophyll a is bound at residue H118. Y126 provides a ligand contact to pheophytin a. The [CaMn4O5] cluster site is built by D170 and E189. The helical transmembrane segment at 197–218 threads the bilayer; sequence FHMLGVAGVFGGSLFSAMHGSL. H198 is a binding site for chlorophyll a. A quinone-binding positions include H215 and 264–265; that span reads SF. H215 lines the Fe cation pocket. H272 provides a ligand contact to Fe cation. Residues 274–288 form a helical membrane-spanning segment; that stretch reads FLAAWPVVGIWFTAL. H332, E333, D342, and A344 together coordinate [CaMn4O5] cluster. The propeptide occupies 345 to 353; sequence AVEAPSING.

The protein belongs to the reaction center PufL/M/PsbA/D family. In terms of assembly, PSII is composed of 1 copy each of membrane proteins PsbA, PsbB, PsbC, PsbD, PsbE, PsbF, PsbH, PsbI, PsbJ, PsbK, PsbL, PsbM, PsbT, PsbX, PsbY, PsbZ, Psb30/Ycf12, at least 3 peripheral proteins of the oxygen-evolving complex and a large number of cofactors. It forms dimeric complexes. It depends on The D1/D2 heterodimer binds P680, chlorophylls that are the primary electron donor of PSII, and subsequent electron acceptors. It shares a non-heme iron and each subunit binds pheophytin, quinone, additional chlorophylls, carotenoids and lipids. D1 provides most of the ligands for the Mn4-Ca-O5 cluster of the oxygen-evolving complex (OEC). There is also a Cl(-1) ion associated with D1 and D2, which is required for oxygen evolution. The PSII complex binds additional chlorophylls, carotenoids and specific lipids. as a cofactor. Post-translationally, tyr-161 forms a radical intermediate that is referred to as redox-active TyrZ, YZ or Y-Z. In terms of processing, C-terminally processed by CTPA; processing is essential to allow assembly of the oxygen-evolving complex and thus photosynthetic growth.

Its subcellular location is the plastid. The protein localises to the chloroplast thylakoid membrane. It carries out the reaction 2 a plastoquinone + 4 hnu + 2 H2O = 2 a plastoquinol + O2. Functionally, photosystem II (PSII) is a light-driven water:plastoquinone oxidoreductase that uses light energy to abstract electrons from H(2)O, generating O(2) and a proton gradient subsequently used for ATP formation. It consists of a core antenna complex that captures photons, and an electron transfer chain that converts photonic excitation into a charge separation. The D1/D2 (PsbA/PsbD) reaction center heterodimer binds P680, the primary electron donor of PSII as well as several subsequent electron acceptors. This Lotus japonicus (Lotus corniculatus var. japonicus) protein is Photosystem II protein D1.